Here is a 367-residue protein sequence, read N- to C-terminus: C-glycoside deglycosidase alpha subunit (367 aa).

Position 146 (Glu-146) interacts with Mg(2+). The Proton acceptor role is filled by His-148. The Mg(2+) site is built by Asp-178, His-276, and Glu-312.

The protein belongs to the C-glycoside deglycosidase alpha subunit family. In terms of assembly, heterodimer composed of an alpha subunit (CarB1) and a beta subunit (CarC1). It depends on Mg(2+) as a cofactor.

It carries out the reaction 3''-dehydroisovitexin = 1,5-anhydro-D-erythro-hex-1-en-3-ulose + apigenin. Activity is strongly reduced in the presence of chelating agents. Carbon-carbon bond-cleaving enzyme which participates in the metabolism of C-glycosides. Acts on the C6-glycosylated compound 3''-dehydroisovitexin (3''-oxo-isovitexin). Shows weak activity with 3''-dehydroisoorientin (3''-oxo-homoorientin) and 3'-dehydromangiferin (3'-oxo-mangiferin). This is C-glycoside deglycosidase alpha subunit from Arthrobacter globiformis (strain ATCC 8010 / DSM 20124 / JCM 1332 / NBRC 12137 / NCIMB 8907 / NRRL B-2979 / 168).